A 584-amino-acid chain; its full sequence is Complement component C8 alpha chain (584 aa).

The signal sequence occupies residues 1 to 20 (MFAVVFFILSLMTCQPGVTA). The propeptide occupies 21 to 30 (QEKVNQRVRR). Residues 38 to 91 (TCQLSNWSEWTDCFPCQDKKYRHRSLLQPNKFGGTICSGDIWDQASCSSSTTCV) enclose the TSP type-1 1 domain. 7 cysteine pairs are disulfide-bonded: Cys39–Cys74, Cys50–Cys84, Cys53–Cys90, Cys96–Cys108, Cys102–Cys121, Cys115–Cys130, and Cys140–Cys177. Trp44 carries a C-linked (Man) tryptophan glycan. Residues 94-132 (AQCGQDFQCKETGRCLKRHLVCNGDQDCLDGSDEDDCED) form the LDL-receptor class A domain. 6 residues coordinate Ca(2+): Leu113, Asn116, Asp118, Asp120, Asp126, and Glu127. Residues 135–498 (AIDEDCSQYE…QYLMEFNACR (364 aa)) enclose the MACPF domain. The next 4 beta stranded transmembrane spans lie at 248 to 256 (FGVTIGIGP), 259 to 266 (SPLLVGVG), 377 to 384 (GGSLGIQY), and 390 to 395 (VGGGLS). A disulfide bond links Cys375 and Cys399. Residue Asn437 is glycosylated (N-linked (GlcNAc...) asparagine). Cystine bridges form between Cys497-Cys544, Cys499-Cys515, Cys502-Cys517, and Cys519-Cys528. The region spanning 499 to 529 (CGPCFNNGVPILEGTSCRCQCRLGSLGAACE) is the EGF-like domain. The TSP type-1 2 domain maps to 539 to 583 (DGSWSCWSSWSVCRAGIQERRRECDNPAPQNGGASCPGRKVQTQA). C-linked (Man) tryptophan glycans are attached at residues Trp542, Trp545, and Trp548. 2 disulfides stabilise this stretch: Cys551-Cys584 and Cys562-Cys574. The interval 562–584 (CDNPAPQNGGASCPGRKVQTQAC) is disordered.

The protein belongs to the complement C6/C7/C8/C9 family. Heterotrimer of 3 chains: alpha (C8A), beta (C8B) and gamma (C8G); the alpha and gamma chains are disulfide bonded. Component of the membrane attack complex (MAC), composed of complement C5b, C6, C7, C8A, C8B, C8G and multiple copies of the pore-forming subunit C9.

The protein localises to the secreted. It is found in the target cell membrane. With respect to regulation, membrane attack complex (MAC) assembly is inhibited by CD59, thereby protecting self-cells from damage during complement activation. CD59 acts by binding to the beta-haipins of C8 (C8A and C8B), forming an intermolecular beta-sheet that prevents incorporation of the multiple copies of C9 required for complete formation of the osmolytic pore. MAC assembly is also inhibited by clusterin (CLU) chaperones that inhibit polymerization of C9. Component of the membrane attack complex (MAC), a multiprotein complex activated by the complement cascade, which inserts into a target cell membrane and forms a pore, leading to target cell membrane rupture and cell lysis. The MAC is initiated by proteolytic cleavage of C5 into complement C5b in response to the classical, alternative, lectin and GZMK complement pathways. The complement pathways consist in a cascade of proteins that leads to phagocytosis and breakdown of pathogens and signaling that strengthens the adaptive immune system. C8A, together with C8B and C8G, inserts into the target membrane, but does not form pores by itself. During MAC assembly, associates with C5b, C6 and C7 to form the C5b8 intermediate complex that inserts into the target membrane and traverses the bilayer increasing membrane rigidity. The protein is Complement component C8 alpha chain of Homo sapiens (Human).